Consider the following 249-residue polypeptide: 3alpha-hydroxy bile acid-CoA-ester 3-dehydrogenase 2 (249 aa).

NAD(+) is bound by residues 15–18 (TRGI), Glu-38, Glu-42, and Asn-92. Ser-144 is a binding site for substrate. Active-site proton donor/acceptor residues include Tyr-157 and Lys-161. NAD(+) contacts are provided by residues Lys-161 and 190–192 (VNT).

This sequence belongs to the short-chain dehydrogenases/reductases (SDR) family. In terms of assembly, homotetramer.

It carries out the reaction a 3alpha-hydroxy bile acid CoA + NAD(+) = a 3-oxo bile acid CoA + NADH + H(+). It catalyses the reaction choloyl-CoA + NAD(+) = 7alpha,12alpha-dihydroxy-3-oxochol-24-oyl-CoA + NADH + H(+). The enzyme catalyses chenodeoxycholoyl-CoA + NAD(+) = 7alpha-hydroxy-3-oxochol-24-oyl-CoA + NADH + H(+). The catalysed reaction is deoxycholoyl-CoA + NAD(+) = 12alpha-hydroxy-3-oxocholan-24-oyl-CoA + NADH + H(+). It carries out the reaction lithocholoyl-CoA + NAD(+) = 3-oxocholan-24-oyl-CoA + NADH + H(+). The protein operates within lipid metabolism; bile acid biosynthesis. Functionally, involved in the multi-step bile acid 7alpha-dehydroxylation pathway that transforms primary bile acids to secondary bile acids in the human gut. Catalyzes the oxidation of C3-hydroxyl group of CoA conjugated bile acids generating a C3-oxo bile acid intermediate. Can use choloyl-CoA, chenodeoxycholoyl-CoA, deoxycholoyl-CoA, and lithocholoyl-CoA as substrates with similar efficiency. Highly prefers NAD over NADP as cosubstrate. Also catalyzes the reverse reactions; in vitro, the preferred direction of reaction depends on the pH. Has very little activity with unconjugated (non-CoA) bile acid substrates. The sequence is that of 3alpha-hydroxy bile acid-CoA-ester 3-dehydrogenase 2 (baiA2) from Clostridium scindens (strain JCM 10418 / VPI 12708).